The chain runs to 579 residues: uncharacterized protein (579 aa).

Transmembrane regions (helical) follow at residues 13–35, 39–61, 66–83, 93–110, 130–152, 162–181, 201–223, 238–257, 264–286, 296–315, and 324–346; these read DLIK…IPWI, SISR…LLLN, ANGL…AFYF, AYWG…TYPL, LAIV…IEYL, IVPK…FFLI, LIVN…LYLA, YIIM…RLLL, GFYR…GIHT, IRVM…LFSM, and LFSL…YYLA.

The protein resides in the cell membrane. This is an uncharacterized protein from Pasteurella multocida (strain Pm70).